Consider the following 376-residue polypeptide: Peroxisomal targeting signal 2 receptor (376 aa).

6 WD repeats span residues 58-98 (DTQD…YPVM), 102-142 (EHQR…NTSL), 182-222 (DNND…PLFM), 226-267 (AHNG…PNVH), 279-319 (GHEF…TSRV), and 339-376 (AHTE…QRLQ).

The protein belongs to the WD repeat peroxin-7 family. Interacts with PEX20. Post-translationally, polyubiquitinated, leading to its degradation by the proteasome. Ubiquitination is dependent of PEX5 and PEX20 and takes place following recycling into the cytosol.

It is found in the cytoplasm. It localises to the cytosol. The protein localises to the peroxisome matrix. In terms of biological role, receptor required for the peroxisomal import of proteins containing a C-terminal PTS2-type peroxisomal targeting signal, such as 3-oxoacyl-CoA thiolase. Specifically binds to cargo proteins containing a PTS2 peroxisomal targeting signal in the cytosol. Cargo protein-binding triggers interaction with PEX20 and formation of a ternary complex composed of PEX20 and PEX7 along with PTS2-containing cargo proteins, which is tranlocated into peroxisomes by passing through the peroxisomal docking complex. PEX7 receptor is then retrotranslocated into the cytosol, where it is ubiquitinated and degraded. This is Peroxisomal targeting signal 2 receptor from Komagataella phaffii (strain GS115 / ATCC 20864) (Yeast).